A 1271-amino-acid chain; its full sequence is DNA-directed RNA polymerase subunit beta (1271 aa).

It belongs to the RNA polymerase beta chain family. In terms of assembly, the RNAP catalytic core consists of 2 alpha, 1 beta, 1 beta' and 1 omega subunit. When a sigma factor is associated with the core the holoenzyme is formed, which can initiate transcription.

It catalyses the reaction RNA(n) + a ribonucleoside 5'-triphosphate = RNA(n+1) + diphosphate. Functionally, DNA-dependent RNA polymerase catalyzes the transcription of DNA into RNA using the four ribonucleoside triphosphates as substrates. In Acholeplasma laidlawii (strain PG-8A), this protein is DNA-directed RNA polymerase subunit beta.